A 302-amino-acid chain; its full sequence is Melibiose operon regulatory protein (302 aa).

The HTH araC/xylS-type domain maps to 194–292 (SQMLGFIAEN…GMSPQQYRKL (99 aa)). 2 DNA-binding regions (H-T-H motif) span residues 211–232 (NDVA…QRVM) and 259–282 (ILDI…GKYV).

Transcription activator for the expression of the melAB operon. MelR binds at two sites located upstream of the melAB transcription site. The chain is Melibiose operon regulatory protein (melR) from Escherichia coli O6:H1 (strain CFT073 / ATCC 700928 / UPEC).